A 72-amino-acid polypeptide reads, in one-letter code: Long neurotoxin OH-5 (72 aa).

Disulfide bonds link Cys3/Cys22, Cys15/Cys43, Cys28/Cys32, Cys47/Cys58, and Cys59/Cys64.

This sequence belongs to the three-finger toxin family. Long-chain subfamily. Type II alpha-neurotoxin sub-subfamily. In terms of tissue distribution, expressed by the venom gland.

The protein resides in the secreted. In terms of biological role, binds with high affinity to muscular (alpha-1/CHRNA1) and neuronal (alpha-7/CHRNA7) nicotinic acetylcholine receptor (nAChR) and inhibits acetylcholine from binding to the receptor, thereby impairing neuromuscular and neuronal transmission. The protein is Long neurotoxin OH-5 of Ophiophagus hannah (King cobra).